The chain runs to 176 residues: MAGLGLRLKAAKWTLRSGSGAVSREWSSEMGKGVRRFSTETENDVPTSGISRPLAEILKELNKKVPDSVIRTRVEDGCSIKYIPWHIVNRIMNMHAPEWSGEVRSVTYSPDGNTVTVAYRVTLYGTDAEIFRESTGTTSVDDKGYGDAVQKAEAMAFRRACARFGLGLHLYHEDAL.

Residues 1–37 (MAGLGLRLKAAKWTLRSGSGAVSREWSSEMGKGVRRF) constitute a mitochondrion transit peptide.

It belongs to the RAD52 family. In terms of assembly, interacts with WHY2. Expressed in root vascular tissue, tips of primary and secondary roots, young leaves, hydathodes, stomatal guard cells, cauline leaves, flower buds, stipules, carpels, pistils and anther filaments.

It is found in the mitochondrion. The protein resides in the nucleus. Functionally, plant-specific single-stranded DNA-binding protein required for efficient heterologous recombination-dependent DNA repair in nuclear and mitochondrial compartments. Forms large nucleo-protein complexes with WHY2 in mitochondria. Binds ssDNA with high affinity, but with little sequence specificity. Involved in double-stranded DNA break repair. Involved in the hydrolytic splicing pathway in mitochondrion. Facilitates the excision of two cis-spliced group II introns, NAD1 intron 2 and NAD2 intron 1. The polypeptide is DNA repair RAD52-like protein 1, mitochondrial (Arabidopsis thaliana (Mouse-ear cress)).